Here is a 126-residue protein sequence, read N- to C-terminus: Protein mmf2, mitochondrial (126 aa).

The protein belongs to the RutC family.

Its subcellular location is the mitochondrion. It is found in the cytoplasm. In terms of biological role, plays a role in the maintenance of mitochondrial DNA. The protein is Protein mmf2, mitochondrial (mmf2) of Schizosaccharomyces pombe (strain 972 / ATCC 24843) (Fission yeast).